The sequence spans 432 residues: Adenylosuccinate synthetase (432 aa).

GTP is bound by residues 13-19 (GDEGKGK) and 41-43 (GHT). Asp-14 serves as the catalytic Proton acceptor. Residues Asp-14 and Gly-41 each coordinate Mg(2+). IMP-binding positions include 14–17 (DEGK), 39–42 (NAGH), Thr-130, Arg-144, Gln-225, Thr-240, and Arg-304. His-42 functions as the Proton donor in the catalytic mechanism. Position 300–306 (300–306 (AVTGRPR)) interacts with substrate. GTP contacts are provided by residues Arg-306, 332–334 (KLD), and 415–417 (STG).

Belongs to the adenylosuccinate synthetase family. In terms of assembly, homodimer. Mg(2+) is required as a cofactor.

It localises to the cytoplasm. The catalysed reaction is IMP + L-aspartate + GTP = N(6)-(1,2-dicarboxyethyl)-AMP + GDP + phosphate + 2 H(+). It participates in purine metabolism; AMP biosynthesis via de novo pathway; AMP from IMP: step 1/2. Its function is as follows. Plays an important role in the de novo pathway of purine nucleotide biosynthesis. Catalyzes the first committed step in the biosynthesis of AMP from IMP. This Actinobacillus pleuropneumoniae serotype 7 (strain AP76) protein is Adenylosuccinate synthetase.